The primary structure comprises 640 residues: Threonine--tRNA ligase (640 aa).

Positions 1–61 constitute a TGS domain; it reads MPVITLPDGS…SNDATLQIIT (61 aa). The tract at residues 242-533 is catalytic; sequence DHRKIGKQLD…LIEHYAGVFP (292 aa). Residues cysteine 333, histidine 384, and histidine 510 each coordinate Zn(2+).

This sequence belongs to the class-II aminoacyl-tRNA synthetase family. In terms of assembly, homodimer. It depends on Zn(2+) as a cofactor.

The protein resides in the cytoplasm. The catalysed reaction is tRNA(Thr) + L-threonine + ATP = L-threonyl-tRNA(Thr) + AMP + diphosphate + H(+). Its function is as follows. Catalyzes the attachment of threonine to tRNA(Thr) in a two-step reaction: L-threonine is first activated by ATP to form Thr-AMP and then transferred to the acceptor end of tRNA(Thr). Also edits incorrectly charged L-seryl-tRNA(Thr). This Pseudomonas putida (strain GB-1) protein is Threonine--tRNA ligase.